Consider the following 394-residue polypeptide: UDP-glucose 6-dehydrogenase (394 aa).

Residues 2–19 (KIAIAGSGYVGLSLAVLL), Val-11, Asp-29, Lys-34, Thr-83, Thr-118, and Glu-145 each bind NAD(+). Residues 141 to 145 (EFLRE), Lys-203, Asn-207, 248 to 252 (YNNPS), and Gly-256 contribute to the substrate site. NAD(+) is bound at residue Tyr-258. Cys-259 acts as the Nucleophile in catalysis. Lys-262 is an NAD(+) binding site. Residue Lys-313 coordinates substrate. An NAD(+)-binding site is contributed by Arg-320.

The protein belongs to the UDP-glucose/GDP-mannose dehydrogenase family.

It catalyses the reaction UDP-alpha-D-glucose + 2 NAD(+) + H2O = UDP-alpha-D-glucuronate + 2 NADH + 3 H(+). It functions in the pathway nucleotide-sugar biosynthesis; UDP-alpha-D-glucuronate biosynthesis; UDP-alpha-D-glucuronate from UDP-alpha-D-glucose: step 1/1. Catalyzes the formation of UDP-glucuronic acid which is required for capsular hyaluronic acid synthesis. Directly responsible for the transformation of some unencapsulated serotype-3 SP mutants to the encapsulated phenotype. In Streptococcus pneumoniae, this protein is UDP-glucose 6-dehydrogenase (cap3A).